Here is a 65-residue protein sequence, read N- to C-terminus: Weak toxin CM-11 (65 aa).

5 disulfides stabilise this stretch: Cys3–Cys24, Cys6–Cys11, Cys17–Cys42, Cys46–Cys57, and Cys58–Cys63.

This sequence belongs to the three-finger toxin family. Ancestral subfamily. Orphan group II sub-subfamily. In terms of tissue distribution, expressed by the venom gland.

It is found in the secreted. In terms of biological role, binds with low affinity to muscular (alpha-1-beta-1-delta-epsilon/CHRNA1-CHRNB1-CHRND-CHRNE) and very low affinity to neuronal (alpha-7/CHRNA7) nicotinic acetylcholine receptor (nAChR). In Naja haje haje (Egyptian cobra), this protein is Weak toxin CM-11.